The primary structure comprises 380 residues: 3-dehydroquinate synthase (380 aa).

Belongs to the archaeal-type DHQ synthase family.

It catalyses the reaction 2-amino-2,3,7-trideoxy-D-lyxo-hept-6-ulosonate + NAD(+) + H2O = 3-dehydroquinate + NH4(+) + NADH + H(+). Its function is as follows. Catalyzes the oxidative deamination and cyclization of 2-amino-3,7-dideoxy-D-threo-hept-6-ulosonic acid (ADH) to yield 3-dehydroquinate (DHQ), which is fed into the canonical shikimic pathway of aromatic amino acid biosynthesis. The chain is 3-dehydroquinate synthase from Methanosarcina barkeri (strain Fusaro / DSM 804).